A 249-amino-acid polypeptide reads, in one-letter code: MEAAADGPAETRSRVEKDSRRAIKDSPAKTQSPAQDTSIMLRNNADTGKVPALPEHKKKRKGYSPAESVKILRDWMYKHRFRAYPSEAEKRMLSKKTNLSLSQISNWFINARRRILPDMLQRRGNDPIVGHKTGKDAHATHLRSTDASVPAKSGPRGSDNVQSLPLRSSPKGQMSGEKIPEPGSAPSQKLTMIAQPKKKVKVSNITSLSSPEPVSTEEYADFSSFQLLVDAAVQRAAELELEKKQESNP.

Disordered stretches follow at residues 1 to 65 and 126 to 199; these read MEAA…GYSP and DPIV…PKKK. The segment covering 9–27 has biased composition (basic and acidic residues); the sequence is AETRSRVEKDSRRAIKDSP. Residues 28-46 show a composition bias toward polar residues; it reads AKTQSPAQDTSIMLRNNAD. Positions 55–118 form a DNA-binding region, homeobox; TALE-type; the sequence is EHKKKRKGYS…INARRRILPD (64 aa). A compositionally biased stretch (polar residues) spans 159–172; the sequence is DNVQSLPLRSSPKG.

This sequence belongs to the TALE/TGIF homeobox family.

The protein resides in the nucleus. Functionally, may have a transcription role in testis. The chain is Homeobox protein TGIF2LX (TGIF2LX) from Macaca mulatta (Rhesus macaque).